We begin with the raw amino-acid sequence, 457 residues long: Acetate--CoA ligase [ADP-forming] II subunit alpha (457 aa).

Belongs to the acetate CoA ligase alpha subunit family. Heterotetramer of two alpha and two beta subunits.

It carries out the reaction acetate + ATP + CoA = acetyl-CoA + ADP + phosphate. Its function is as follows. Catalyzes the reversible formation of acetate and ATP from acetyl-CoA by using ADP and phosphate. Can use other substrates such as phenylacetyl-CoA, indoleacetyl-CoA and isobutyryl-CoA, but not succinyl-CoA. Seems to be involved primarily in the degradation of aryl-CoA esters to the corresponding acids. Participates in the conversion of acetyl-CoA to acetate and in the degradation of branched-chain amino acids via branched-chain-acyl-CoA esters. In Pyrococcus furiosus (strain ATCC 43587 / DSM 3638 / JCM 8422 / Vc1), this protein is Acetate--CoA ligase [ADP-forming] II subunit alpha.